The primary structure comprises 189 residues: Peptide deformylase (189 aa).

Fe cation contacts are provided by Cys116 and His159. Glu160 is an active-site residue. His163 contacts Fe cation.

Belongs to the polypeptide deformylase family. Fe(2+) is required as a cofactor.

The enzyme catalyses N-terminal N-formyl-L-methionyl-[peptide] + H2O = N-terminal L-methionyl-[peptide] + formate. In terms of biological role, removes the formyl group from the N-terminal Met of newly synthesized proteins. Requires at least a dipeptide for an efficient rate of reaction. N-terminal L-methionine is a prerequisite for activity but the enzyme has broad specificity at other positions. This is Peptide deformylase from Limosilactobacillus fermentum (strain NBRC 3956 / LMG 18251) (Lactobacillus fermentum).